The following is a 257-amino-acid chain: Cobalt transport protein CbiM (257 aa).

A signal peptide spans methionine 1–alanine 33. 6 helical membrane-spanning segments follow: residues glycine 39–tryptophan 59, serine 74–proline 94, leucine 117–glycine 137, leucine 138–leucine 158, alanine 171–leucine 191, and leucine 214–tryptophan 234.

This sequence belongs to the CbiM family. Forms an energy-coupling factor (ECF) transporter complex composed of an ATP-binding protein (A component, CbiO), a transmembrane protein (T component, CbiQ) and 2 possible substrate-capture proteins (S components, CbiM and CbiN) of unknown stoichimetry.

It is found in the cell inner membrane. Its pathway is cofactor biosynthesis; adenosylcobalamin biosynthesis. Its function is as follows. Part of the energy-coupling factor (ECF) transporter complex CbiMNOQ involved in cobalt import. The protein is Cobalt transport protein CbiM of Thermosynechococcus vestitus (strain NIES-2133 / IAM M-273 / BP-1).